Reading from the N-terminus, the 279-residue chain is Probable endonuclease 4 (279 aa).

9 residues coordinate Zn(2+): His-68, His-108, Glu-143, Asp-177, His-180, His-214, Asp-227, His-229, and Glu-259.

The protein belongs to the AP endonuclease 2 family. It depends on Zn(2+) as a cofactor.

It catalyses the reaction Endonucleolytic cleavage to 5'-phosphooligonucleotide end-products.. Functionally, endonuclease IV plays a role in DNA repair. It cleaves phosphodiester bonds at apurinic or apyrimidinic (AP) sites, generating a 3'-hydroxyl group and a 5'-terminal sugar phosphate. The protein is Probable endonuclease 4 of Nitrosopumilus maritimus (strain SCM1).